The sequence spans 204 residues: Altered inheritance of mitochondria protein 20 (204 aa).

Residues 6 to 26 traverse the membrane as a helical segment; that stretch reads VAVGTAVGIPIAVGVIIALIF.

Belongs to the SKG1 family.

It localises to the vacuole membrane. Functionally, involved in cell cycle progression and surviving DNA damage. The sequence is that of Altered inheritance of mitochondria protein 20 (AIM20) from Saccharomyces cerevisiae (strain RM11-1a) (Baker's yeast).